A 99-amino-acid chain; its full sequence is Cell cycle protein GpsB (99 aa).

The stretch at 34–71 (LDMIIKDYETFHQEIEELQQENLQLKKQLEEASKKQPV) forms a coiled coil.

Belongs to the GpsB family. In terms of assembly, forms polymers through the coiled coil domains. Interacts with PBP1, MreC and EzrA.

It is found in the cytoplasm. Its function is as follows. Divisome component that associates with the complex late in its assembly, after the Z-ring is formed, and is dependent on DivIC and PBP2B for its recruitment to the divisome. Together with EzrA, is a key component of the system that regulates PBP1 localization during cell cycle progression. Its main role could be the removal of PBP1 from the cell pole after pole maturation is completed. Also contributes to the recruitment of PBP1 to the division complex. Not essential for septum formation. In Bacillus velezensis (strain DSM 23117 / BGSC 10A6 / LMG 26770 / FZB42) (Bacillus amyloliquefaciens subsp. plantarum), this protein is Cell cycle protein GpsB.